A 286-amino-acid polypeptide reads, in one-letter code: 4-diphosphocytidyl-2-C-methyl-D-erythritol kinase (286 aa).

K10 is a catalytic residue. 100–110 (PMGSGLGGGSS) is a binding site for ATP. D142 is a catalytic residue.

The protein belongs to the GHMP kinase family. IspE subfamily. Homodimer.

It carries out the reaction 4-CDP-2-C-methyl-D-erythritol + ATP = 4-CDP-2-C-methyl-D-erythritol 2-phosphate + ADP + H(+). Its pathway is isoprenoid biosynthesis; isopentenyl diphosphate biosynthesis via DXP pathway; isopentenyl diphosphate from 1-deoxy-D-xylulose 5-phosphate: step 3/6. Catalyzes the phosphorylation of the position 2 hydroxy group of 4-diphosphocytidyl-2C-methyl-D-erythritol. This chain is 4-diphosphocytidyl-2-C-methyl-D-erythritol kinase, found in Buchnera aphidicola subsp. Acyrthosiphon pisum (strain APS) (Acyrthosiphon pisum symbiotic bacterium).